A 328-amino-acid chain; its full sequence is Bcl-2/adenovirus E1B 19 kDa-interacting protein 2-like protein (328 aa).

Residues 1–22 (MKLGELELREEWQDEEFPRLLP) show a composition bias toward basic and acidic residues. Residues 1-116 (MKLGELELRE…DSGHEFEWED (116 aa)) form a disordered region. Over residues 36–45 (RGSQAGTPSS) the composition is skewed to polar residues. Residues 76–89 (ASPTRSASSSSAGS) are compositionally biased toward low complexity. The segment covering 92–105 (LEVDELETPSDSEQ) has biased composition (acidic residues). The span at 107–116 (DSGHEFEWED) shows a compositional bias: basic and acidic residues. Positions 162–323 (DMTIIEPYKK…VVRQLDRDLH (162 aa)) constitute a CRAL-TRIO domain.

As to quaternary structure, homodimer. Interacts with BCL2, ARHGAP1, MIF and GFER.

Its function is as follows. May be a bridge molecule between BCL2 and ARHGAP1/CDC42 in promoting cell death. The chain is Bcl-2/adenovirus E1B 19 kDa-interacting protein 2-like protein (Bnipl) from Mus musculus (Mouse).